An 89-amino-acid polypeptide reads, in one-letter code: MDLNLCLLCGNSIDAEGLYCSNECRIQDKATTELFSDPLKSPSLNETIDYLALNYFDLFSRRSSMCSSSNSSIYSGIYYTELKNYSVEN.

It belongs to the ecl1 family.

The protein resides in the nucleus. Functionally, involved in chronological cell aging. The polypeptide is Extender of the chronological lifespan protein ecl3 (ecl3) (Schizosaccharomyces pombe (strain 972 / ATCC 24843) (Fission yeast)).